We begin with the raw amino-acid sequence, 207 residues long: Ribonuclease HII (207 aa).

The region spanning 18-207 is the RNase H type-2 domain; the sequence is TYLSGSDEAG…PIKKISKETS (190 aa). A divalent metal cation is bound by residues D24, E25, and D116.

It belongs to the RNase HII family. Requires Mn(2+) as cofactor. The cofactor is Mg(2+).

It localises to the cytoplasm. It catalyses the reaction Endonucleolytic cleavage to 5'-phosphomonoester.. Its function is as follows. Endonuclease that specifically degrades the RNA of RNA-DNA hybrids. The sequence is that of Ribonuclease HII from Mycoplasma capricolum subsp. capricolum (strain California kid / ATCC 27343 / NCTC 10154).